A 600-amino-acid polypeptide reads, in one-letter code: Translation initiation factor IF-2 (600 aa).

A tr-type G domain is found at 112–279 (ERAPIITVMG…AINLQAEILE (168 aa)). A G1 region spans residues 121–128 (GHVDHGKT). Position 121–128 (121–128 (GHVDHGKT)) interacts with GTP. The interval 146-150 (GITQH) is G2. Positions 167 to 170 (DTPG) are G3. GTP-binding positions include 167–171 (DTPGH) and 221–224 (NKMD). The interval 221–224 (NKMD) is G4. The segment at 257–259 (SAL) is G5.

The protein belongs to the TRAFAC class translation factor GTPase superfamily. Classic translation factor GTPase family. IF-2 subfamily.

Its subcellular location is the cytoplasm. In terms of biological role, one of the essential components for the initiation of protein synthesis. Protects formylmethionyl-tRNA from spontaneous hydrolysis and promotes its binding to the 30S ribosomal subunits. Also involved in the hydrolysis of GTP during the formation of the 70S ribosomal complex. This chain is Translation initiation factor IF-2, found in Mycoplasma mobile (strain ATCC 43663 / 163K / NCTC 11711) (Mesomycoplasma mobile).